Consider the following 221-residue polypeptide: Pyridoxine/pyridoxamine 5'-phosphate oxidase (221 aa).

Residues 1–21 form a disordered region; it reads MDYSDPAELRESYDGAPLDPR. Substrate is bound by residues 10 to 13 and lysine 68; that span reads RESY. Residues 63–68, 78–79, arginine 84, lysine 85, and glutamine 107 contribute to the FMN site; these read RTVLLK and FT. Tyrosine 125, arginine 129, and serine 133 together coordinate substrate. FMN contacts are provided by residues 143-144 and tryptophan 189; that span reads QS. Residue 195–197 coordinates substrate; sequence RMH. Arginine 199 contributes to the FMN binding site.

This sequence belongs to the pyridoxamine 5'-phosphate oxidase family. Homodimer. FMN is required as a cofactor.

It carries out the reaction pyridoxamine 5'-phosphate + O2 + H2O = pyridoxal 5'-phosphate + H2O2 + NH4(+). It catalyses the reaction pyridoxine 5'-phosphate + O2 = pyridoxal 5'-phosphate + H2O2. Its pathway is cofactor metabolism; pyridoxal 5'-phosphate salvage; pyridoxal 5'-phosphate from pyridoxamine 5'-phosphate: step 1/1. The protein operates within cofactor metabolism; pyridoxal 5'-phosphate salvage; pyridoxal 5'-phosphate from pyridoxine 5'-phosphate: step 1/1. Catalyzes the oxidation of either pyridoxine 5'-phosphate (PNP) or pyridoxamine 5'-phosphate (PMP) into pyridoxal 5'-phosphate (PLP). In Thermobifida fusca (strain YX), this protein is Pyridoxine/pyridoxamine 5'-phosphate oxidase.